The sequence spans 196 residues: Elongation factor Ts (196 aa).

An involved in Mg(2+) ion dislocation from EF-Tu region spans residues 80-83 (TDFV).

It belongs to the EF-Ts family. In terms of assembly, heterotetramer composed of two EF-Ts.EF-Tu dimer complexes.

Its subcellular location is the cytoplasm. Associates with the EF-Tu.GDP complex and induces the exchange of GDP to GTP. It remains bound to the aminoacyl-tRNA.EF-Tu.GTP complex up to the GTP hydrolysis stage on the ribosome. This Thermus thermophilus (strain ATCC 27634 / DSM 579 / HB8) protein is Elongation factor Ts (tsf).